The following is a 204-amino-acid chain: ATP-dependent Clp protease proteolytic subunit (204 aa).

Ser-102 (nucleophile) is an active-site residue. His-127 is a catalytic residue.

The protein belongs to the peptidase S14 family. In terms of assembly, fourteen ClpP subunits assemble into 2 heptameric rings which stack back to back to give a disk-like structure with a central cavity, resembling the structure of eukaryotic proteasomes.

It is found in the cytoplasm. It carries out the reaction Hydrolysis of proteins to small peptides in the presence of ATP and magnesium. alpha-casein is the usual test substrate. In the absence of ATP, only oligopeptides shorter than five residues are hydrolyzed (such as succinyl-Leu-Tyr-|-NHMec, and Leu-Tyr-Leu-|-Tyr-Trp, in which cleavage of the -Tyr-|-Leu- and -Tyr-|-Trp bonds also occurs).. Functionally, cleaves peptides in various proteins in a process that requires ATP hydrolysis. Has a chymotrypsin-like activity. Plays a major role in the degradation of misfolded proteins. The polypeptide is ATP-dependent Clp protease proteolytic subunit (Neisseria gonorrhoeae (strain ATCC 700825 / FA 1090)).